The primary structure comprises 216 residues: Large ribosomal subunit protein uL4 (216 aa).

The disordered stretch occupies residues 51–78 (KGRSEVHGSNTKPYKQKGTGRARRGDKK). Residues 64 to 76 (YKQKGTGRARRGD) show a composition bias toward basic residues.

The protein belongs to the universal ribosomal protein uL4 family. As to quaternary structure, part of the 50S ribosomal subunit.

One of the primary rRNA binding proteins, this protein initially binds near the 5'-end of the 23S rRNA. It is important during the early stages of 50S assembly. It makes multiple contacts with different domains of the 23S rRNA in the assembled 50S subunit and ribosome. Functionally, forms part of the polypeptide exit tunnel. The sequence is that of Large ribosomal subunit protein uL4 from Treponema pallidum (strain Nichols).